A 293-amino-acid chain; its full sequence is Nucleotide-binding protein Dole_0503 (293 aa).

Residue Gly-11–Ser-18 coordinates ATP. Asp-62–Glu-65 serves as a coordination point for GTP.

It belongs to the RapZ-like family.

Displays ATPase and GTPase activities. This Desulfosudis oleivorans (strain DSM 6200 / JCM 39069 / Hxd3) (Desulfococcus oleovorans) protein is Nucleotide-binding protein Dole_0503.